The following is a 336-amino-acid chain: MLFGMRALKVLGIESTAHTFGVGIATSSGDILVNVNHTYVPRHGGIKPTEAAEHHSRVAPKVLSEALQKAGISVEEVDAVAVALGPGMGPCLRVGATLARYLALKFGKPLVPVNHAIAHLEISRLTTGLEDPVFVYVAGGNTMVTTFNEGRYRVFGETLDIPLGNCLDTFAREVGLGFPGVPRVEELALKGREYIPLPYTVKGQDVSYSGLLTHALSLYRSGRARLEDVCYSLVETAYSMLVEVAERALAHTGKSQLVLTGGVARSRILLEKLRRMVEDRGGVLGVVPPEYAGDNGAMIAYTGALAFSHGVRVPVEESRIQPYWRVDEVVIPWRSR.

Fe cation-binding residues include H115, H119, and Y136. Residues 136 to 140, D168, E185, and S266 each bind substrate; that span reads YVAGG. Residue D294 coordinates Fe cation.

This sequence belongs to the KAE1 / TsaD family. Fe(2+) is required as a cofactor.

It localises to the cytoplasm. The enzyme catalyses L-threonylcarbamoyladenylate + adenosine(37) in tRNA = N(6)-L-threonylcarbamoyladenosine(37) in tRNA + AMP + H(+). Required for the formation of a threonylcarbamoyl group on adenosine at position 37 (t(6)A37) in tRNAs that read codons beginning with adenine. Is probably involved in the transfer of the threonylcarbamoyl moiety of threonylcarbamoyl-AMP (TC-AMP) to the N6 group of A37. The protein is tRNA N6-adenosine threonylcarbamoyltransferase of Thermofilum pendens (strain DSM 2475 / Hrk 5).